A 396-amino-acid polypeptide reads, in one-letter code: F-box protein At2g21930 (396 aa).

The 47-residue stretch at 19 to 65 folds into the F-box domain; it reads SGNSVQIPFDLIPEILKRLPVKTLARFLSVSKEYTSIIRNRDFMKSY.

The polypeptide is F-box protein At2g21930 (Arabidopsis thaliana (Mouse-ear cress)).